Reading from the N-terminus, the 578-residue chain is Potassium-transporting ATPase potassium-binding subunit (578 aa).

Helical transmembrane passes span 3–23 (AAALAEIAAFFGLLTAAAVPL), 67–87 (AAAALTFNAAGLLAVFALERL), 95–115 (PAGLPAVSPLVAWNTAVSFAT), 136–156 (ALTVQNFLSAATGISVLAALV), 181–201 (LLLPLAAALALLLAWQGVPQT), 264–284 (LEALSILLVPAALCFAFGALV), 291–311 (WTVYSAMLAILVPLTVATVSA), 396–416 (GLYGMLLFAILAVFLAGLMVG), 436–456 (LAILAPSATVLLGTAAACLLP), 504–524 (VAMLVGRYWVMLPVLAIAGAF), and 543–563 (LFAGLLVATVLLVGALTFLPA).

The protein belongs to the KdpA family. As to quaternary structure, the system is composed of three essential subunits: KdpA, KdpB and KdpC.

The protein localises to the cell inner membrane. Functionally, part of the high-affinity ATP-driven potassium transport (or Kdp) system, which catalyzes the hydrolysis of ATP coupled with the electrogenic transport of potassium into the cytoplasm. This subunit binds the periplasmic potassium ions and delivers the ions to the membrane domain of KdpB through an intramembrane tunnel. This is Potassium-transporting ATPase potassium-binding subunit from Anaeromyxobacter dehalogenans (strain 2CP-C).